A 331-amino-acid polypeptide reads, in one-letter code: tRNA-cytidine(32) 2-sulfurtransferase (331 aa).

The interval 1-33 is disordered; the sequence is MNAPHMNDTAADAATLDDAAAPAGRPALTRREQ. Low complexity predominate over residues 8–23; the sequence is DTAADAATLDDAAAPA. The short motif at 71 to 76 is the PP-loop motif element; the sequence is SGGKDS. [4Fe-4S] cluster contacts are provided by cysteine 146, cysteine 149, and cysteine 237.

The protein belongs to the TtcA family. As to quaternary structure, homodimer. Requires Mg(2+) as cofactor. It depends on [4Fe-4S] cluster as a cofactor.

Its subcellular location is the cytoplasm. It carries out the reaction cytidine(32) in tRNA + S-sulfanyl-L-cysteinyl-[cysteine desulfurase] + AH2 + ATP = 2-thiocytidine(32) in tRNA + L-cysteinyl-[cysteine desulfurase] + A + AMP + diphosphate + H(+). The protein operates within tRNA modification. In terms of biological role, catalyzes the ATP-dependent 2-thiolation of cytidine in position 32 of tRNA, to form 2-thiocytidine (s(2)C32). The sulfur atoms are provided by the cysteine/cysteine desulfurase (IscS) system. In Burkholderia cenocepacia (strain HI2424), this protein is tRNA-cytidine(32) 2-sulfurtransferase.